A 276-amino-acid chain; its full sequence is NADPH-dependent 7-cyano-7-deazaguanine reductase (276 aa).

83-85 (IES) provides a ligand contact to substrate. 85-86 (SK) contacts NADPH. Cys-184 serves as the catalytic Thioimide intermediate. The active-site Proton donor is the Asp-191. 223 to 224 (HE) contacts substrate. 252–253 (RG) serves as a coordination point for NADPH.

This sequence belongs to the GTP cyclohydrolase I family. QueF type 2 subfamily. As to quaternary structure, homodimer.

The protein localises to the cytoplasm. It carries out the reaction 7-aminomethyl-7-carbaguanine + 2 NADP(+) = 7-cyano-7-deazaguanine + 2 NADPH + 3 H(+). It participates in tRNA modification; tRNA-queuosine biosynthesis. In terms of biological role, catalyzes the NADPH-dependent reduction of 7-cyano-7-deazaguanine (preQ0) to 7-aminomethyl-7-deazaguanine (preQ1). This is NADPH-dependent 7-cyano-7-deazaguanine reductase from Pseudomonas syringae pv. syringae (strain B728a).